Consider the following 96-residue polypeptide: DNA-directed RNA polymerase subunit Rpo11 (96 aa).

Belongs to the archaeal Rpo11/eukaryotic RPB11/RPC19 RNA polymerase subunit family. In terms of assembly, part of the RNA polymerase complex.

It localises to the cytoplasm. It catalyses the reaction RNA(n) + a ribonucleoside 5'-triphosphate = RNA(n+1) + diphosphate. Its function is as follows. DNA-dependent RNA polymerase (RNAP) catalyzes the transcription of DNA into RNA using the four ribonucleoside triphosphates as substrates. In Methanococcus maripaludis (strain DSM 14266 / JCM 13030 / NBRC 101832 / S2 / LL), this protein is DNA-directed RNA polymerase subunit Rpo11.